A 291-amino-acid chain; its full sequence is Protease HtpX homolog (291 aa).

The next 2 helical transmembrane spans lie at 4-24 (VFLFLITNLAVILVLSFSARL) and 38-58 (MGMLLAFAALIGFGGSFISLL). Zn(2+) is bound at residue His144. Glu145 is an active-site residue. His148 lines the Zn(2+) pocket. 2 consecutive transmembrane segments (helical) span residues 159 to 179 (LIQGVVNTFVIFLARVFAYAL) and 199 to 219 (ISSIAFEIVFGILASIVVMYF). Glu224 contributes to the Zn(2+) binding site.

It belongs to the peptidase M48B family. It depends on Zn(2+) as a cofactor.

Its subcellular location is the cell inner membrane. This chain is Protease HtpX homolog, found in Chlorobium phaeovibrioides (strain DSM 265 / 1930) (Prosthecochloris vibrioformis (strain DSM 265)).